Here is a 246-residue protein sequence, read N- to C-terminus: DNA repair protein RecO (246 aa).

Belongs to the RecO family.

In terms of biological role, involved in DNA repair and RecF pathway recombination. In Pelobacter propionicus (strain DSM 2379 / NBRC 103807 / OttBd1), this protein is DNA repair protein RecO.